We begin with the raw amino-acid sequence, 300 residues long: Enoyl-CoA hydratase domain-containing protein 3, mitochondrial (300 aa).

The N-terminal 66 residues, 1–66 (MAVVAGLRAF…RNIVLSNPRR (66 aa)), are a transit peptide targeting the mitochondrion. The segment at 34–53 (GSAGPAGSESEPRLTSTRQQ) is disordered. An N6-succinyllysine modification is found at Lys-110.

It belongs to the enoyl-CoA hydratase/isomerase family.

Its subcellular location is the mitochondrion. In terms of biological role, may play a role in fatty acid biosynthesis and insulin sensitivity. This chain is Enoyl-CoA hydratase domain-containing protein 3, mitochondrial, found in Mus musculus (Mouse).